Here is a 302-residue protein sequence, read N- to C-terminus: Methionyl-tRNA formyltransferase (302 aa).

107 to 110 provides a ligand contact to (6S)-5,6,7,8-tetrahydrofolate; the sequence is SLLP.

The protein belongs to the Fmt family.

It carries out the reaction L-methionyl-tRNA(fMet) + (6R)-10-formyltetrahydrofolate = N-formyl-L-methionyl-tRNA(fMet) + (6S)-5,6,7,8-tetrahydrofolate + H(+). In terms of biological role, attaches a formyl group to the free amino group of methionyl-tRNA(fMet). The formyl group appears to play a dual role in the initiator identity of N-formylmethionyl-tRNA by promoting its recognition by IF2 and preventing the misappropriation of this tRNA by the elongation apparatus. This chain is Methionyl-tRNA formyltransferase, found in Leifsonia xyli subsp. xyli (strain CTCB07).